A 663-amino-acid polypeptide reads, in one-letter code: UvrABC system protein B (663 aa).

The Helicase ATP-binding domain occupies 27–414 (KNIENGVKDQ…SDNHIAEQLI (388 aa)). Position 40–47 (40–47 (GVTGSGKT)) interacts with ATP. Residues 93–116 (YYDYYQPEAYIKTTDTYIEKDSSV) carry the Beta-hairpin motif. Positions 432 to 594 (QVDDLLDEIR…IDPKSIIKEI (163 aa)) constitute a Helicase C-terminal domain. The 36-residue stretch at 624-659 (EKEITKLEKKIKKLVEELDFEQAIILRDEMLKLKEL) folds into the UVR domain.

Belongs to the UvrB family. As to quaternary structure, forms a heterotetramer with UvrA during the search for lesions. Interacts with UvrC in an incision complex.

It is found in the cytoplasm. Its function is as follows. The UvrABC repair system catalyzes the recognition and processing of DNA lesions. A damage recognition complex composed of 2 UvrA and 2 UvrB subunits scans DNA for abnormalities. Upon binding of the UvrA(2)B(2) complex to a putative damaged site, the DNA wraps around one UvrB monomer. DNA wrap is dependent on ATP binding by UvrB and probably causes local melting of the DNA helix, facilitating insertion of UvrB beta-hairpin between the DNA strands. Then UvrB probes one DNA strand for the presence of a lesion. If a lesion is found the UvrA subunits dissociate and the UvrB-DNA preincision complex is formed. This complex is subsequently bound by UvrC and the second UvrB is released. If no lesion is found, the DNA wraps around the other UvrB subunit that will check the other stand for damage. In Fusobacterium nucleatum subsp. nucleatum (strain ATCC 25586 / DSM 15643 / BCRC 10681 / CIP 101130 / JCM 8532 / KCTC 2640 / LMG 13131 / VPI 4355), this protein is UvrABC system protein B.